The primary structure comprises 381 residues: MNEKRKIQVLCIDDSALIRSILKEIINAQPDMEVVGVAPDPIIARDLIKQTNPDVLTLDVEMPKMDGLDFLEKLMRLRPTPVVMISSLTERGSEATLRALELGAVDFVAKPKLGMRDGMNEYADQIADKIRAAARARLRPRTASPAPAPAAASPAHAVHTAHAVHARPEHDAAAVPAPARTHFSSTEKLIIVGASTGGTEAIKDFLLEMPPDCPGILIVQHMPAGFTTSFAKRLDGLCRIRVKEAVHGERVLPGHAYIAPGDMHLSLGRSGANYVTELDQNPPVNRHRPAVDVLFRSAARNAGANALGVILTGMGKDGAAGMLEMRNAGAYNVAQDEASCVVYGMPKEAVAHGGVHEILPLHQIGPHVLARLSAHGRVTRV.

A Response regulatory domain is found at 8–125 (QVLCIDDSAL…RDGMNEYADQ (118 aa)). Aspartate 59 is modified (4-aspartylphosphate). Residues 183 to 375 (FSSTEKLIIV…PHVLARLSAH (193 aa)) form the CheB-type methylesterase domain. Active-site residues include serine 195, histidine 221, and aspartate 317.

This sequence belongs to the CheB family. Phosphorylated by CheA. Phosphorylation of the N-terminal regulatory domain activates the methylesterase activity.

Its subcellular location is the cytoplasm. It catalyses the reaction [protein]-L-glutamate 5-O-methyl ester + H2O = L-glutamyl-[protein] + methanol + H(+). The enzyme catalyses L-glutaminyl-[protein] + H2O = L-glutamyl-[protein] + NH4(+). Its function is as follows. Involved in chemotaxis. Part of a chemotaxis signal transduction system that modulates chemotaxis in response to various stimuli. Catalyzes the demethylation of specific methylglutamate residues introduced into the chemoreceptors (methyl-accepting chemotaxis proteins or MCP) by CheR. Also mediates the irreversible deamidation of specific glutamine residues to glutamic acid. The protein is Protein-glutamate methylesterase/protein-glutamine glutaminase of Ralstonia nicotianae (strain ATCC BAA-1114 / GMI1000) (Ralstonia solanacearum).